A 207-amino-acid chain; its full sequence is Outer-membrane lipoprotein carrier protein (207 aa).

An N-terminal signal peptide occupies residues 1-21 (MRLIRMLLLPVLAVTTLSAHA).

This sequence belongs to the LolA family. Monomer.

It localises to the periplasm. Participates in the translocation of lipoproteins from the inner membrane to the outer membrane. Only forms a complex with a lipoprotein if the residue after the N-terminal Cys is not an aspartate (The Asp acts as a targeting signal to indicate that the lipoprotein should stay in the inner membrane). This Pseudomonas fluorescens (strain ATCC BAA-477 / NRRL B-23932 / Pf-5) protein is Outer-membrane lipoprotein carrier protein.